The following is a 105-amino-acid chain: Large ribosomal subunit protein eL30 (105 aa).

Glycyl lysine isopeptide (Lys-Gly) (interchain with G-Cter in ubiquitin) cross-links involve residues Lys22, Lys53, and Lys83.

It belongs to the eukaryotic ribosomal protein eL30 family. Component of the large ribosomal subunit (LSU). Mature yeast ribosomes consist of a small (40S) and a large (60S) subunit. The 40S small subunit contains 1 molecule of ribosomal RNA (18S rRNA) and 33 different proteins (encoded by 57 genes). The large 60S subunit contains 3 rRNA molecules (25S, 5.8S and 5S rRNA) and 46 different proteins (encoded by 81 genes).

Its subcellular location is the cytoplasm. In terms of biological role, component of the ribosome, a large ribonucleoprotein complex responsible for the synthesis of proteins in the cell. The small ribosomal subunit (SSU) binds messenger RNAs (mRNAs) and translates the encoded message by selecting cognate aminoacyl-transfer RNA (tRNA) molecules. The large subunit (LSU) contains the ribosomal catalytic site termed the peptidyl transferase center (PTC), which catalyzes the formation of peptide bonds, thereby polymerizing the amino acids delivered by tRNAs into a polypeptide chain. The nascent polypeptides leave the ribosome through a tunnel in the LSU and interact with protein factors that function in enzymatic processing, targeting, and the membrane insertion of nascent chains at the exit of the ribosomal tunnel. The sequence is that of Large ribosomal subunit protein eL30 from Saccharomyces cerevisiae (strain ATCC 204508 / S288c) (Baker's yeast).